The following is a 481-amino-acid chain: Aspartyl/glutamyl-tRNA(Asn/Gln) amidotransferase subunit B (481 aa).

The protein belongs to the GatB/GatE family. GatB subfamily. Heterotrimer of A, B and C subunits.

The catalysed reaction is L-glutamyl-tRNA(Gln) + L-glutamine + ATP + H2O = L-glutaminyl-tRNA(Gln) + L-glutamate + ADP + phosphate + H(+). The enzyme catalyses L-aspartyl-tRNA(Asn) + L-glutamine + ATP + H2O = L-asparaginyl-tRNA(Asn) + L-glutamate + ADP + phosphate + 2 H(+). Allows the formation of correctly charged Asn-tRNA(Asn) or Gln-tRNA(Gln) through the transamidation of misacylated Asp-tRNA(Asn) or Glu-tRNA(Gln) in organisms which lack either or both of asparaginyl-tRNA or glutaminyl-tRNA synthetases. The reaction takes place in the presence of glutamine and ATP through an activated phospho-Asp-tRNA(Asn) or phospho-Glu-tRNA(Gln). The sequence is that of Aspartyl/glutamyl-tRNA(Asn/Gln) amidotransferase subunit B from Pseudomonas putida (strain ATCC 700007 / DSM 6899 / JCM 31910 / BCRC 17059 / LMG 24140 / F1).